The primary structure comprises 156 residues: Small ribosomal subunit protein uS7 (156 aa).

This sequence belongs to the universal ribosomal protein uS7 family. As to quaternary structure, part of the 30S ribosomal subunit. Contacts proteins S9 and S11.

One of the primary rRNA binding proteins, it binds directly to 16S rRNA where it nucleates assembly of the head domain of the 30S subunit. Is located at the subunit interface close to the decoding center, probably blocks exit of the E-site tRNA. The sequence is that of Small ribosomal subunit protein uS7 from Klebsiella pneumoniae (strain 342).